The sequence spans 299 residues: 4-diphosphocytidyl-2-C-methyl-D-erythritol kinase (299 aa).

Lysine 17 is a catalytic residue. Proline 99–serine 109 is a binding site for ATP. Aspartate 142 is a catalytic residue.

This sequence belongs to the GHMP kinase family. IspE subfamily.

The enzyme catalyses 4-CDP-2-C-methyl-D-erythritol + ATP = 4-CDP-2-C-methyl-D-erythritol 2-phosphate + ADP + H(+). It participates in isoprenoid biosynthesis; isopentenyl diphosphate biosynthesis via DXP pathway; isopentenyl diphosphate from 1-deoxy-D-xylulose 5-phosphate: step 3/6. In terms of biological role, catalyzes the phosphorylation of the position 2 hydroxy group of 4-diphosphocytidyl-2C-methyl-D-erythritol. The protein is 4-diphosphocytidyl-2-C-methyl-D-erythritol kinase of Deinococcus radiodurans (strain ATCC 13939 / DSM 20539 / JCM 16871 / CCUG 27074 / LMG 4051 / NBRC 15346 / NCIMB 9279 / VKM B-1422 / R1).